Consider the following 21-residue polypeptide: Pseudogermin (21 aa).

Belongs to the germin family. In terms of assembly, homotetramer.

It is found in the secreted. The protein localises to the extracellular space. The protein resides in the apoplast. Its subcellular location is the cell wall. Its function is as follows. May subsume the role of germin at the low water potentials during embryogenesis. This is Pseudogermin from Triticum aestivum (Wheat).